Consider the following 299-residue polypeptide: Glutamyl-Q tRNA(Asp) synthetase (299 aa).

L-glutamate contacts are provided by residues 9 to 13 (RFAPS) and E45. The short motif at 12-22 (PSPTGPLHFGS) is the 'HIGH' region element. Zn(2+) contacts are provided by C101, C103, and C118. Residues Y170 and R188 each coordinate L-glutamate. A 'KMSKS' region motif is present at residues 226–230 (KLSKS). Residue K229 coordinates ATP. Residues 279-299 (QLLPRQRQRDRATCAYERQRD) form a disordered region. Residues 285 to 299 (RQRDRATCAYERQRD) are compositionally biased toward basic and acidic residues.

It belongs to the class-I aminoacyl-tRNA synthetase family. GluQ subfamily. Requires Zn(2+) as cofactor.

Functionally, catalyzes the tRNA-independent activation of glutamate in presence of ATP and the subsequent transfer of glutamate onto a tRNA(Asp). Glutamate is transferred on the 2-amino-5-(4,5-dihydroxy-2-cyclopenten-1-yl) moiety of the queuosine in the wobble position of the QUC anticodon. In Xanthomonas oryzae pv. oryzae (strain KACC10331 / KXO85), this protein is Glutamyl-Q tRNA(Asp) synthetase.